Reading from the N-terminus, the 574-residue chain is Proline--tRNA ligase (574 aa).

The protein belongs to the class-II aminoacyl-tRNA synthetase family. ProS type 1 subfamily. As to quaternary structure, homodimer.

Its subcellular location is the cytoplasm. It carries out the reaction tRNA(Pro) + L-proline + ATP = L-prolyl-tRNA(Pro) + AMP + diphosphate. Catalyzes the attachment of proline to tRNA(Pro) in a two-step reaction: proline is first activated by ATP to form Pro-AMP and then transferred to the acceptor end of tRNA(Pro). As ProRS can inadvertently accommodate and process non-cognate amino acids such as alanine and cysteine, to avoid such errors it has two additional distinct editing activities against alanine. One activity is designated as 'pretransfer' editing and involves the tRNA(Pro)-independent hydrolysis of activated Ala-AMP. The other activity is designated 'posttransfer' editing and involves deacylation of mischarged Ala-tRNA(Pro). The misacylated Cys-tRNA(Pro) is not edited by ProRS. This Nautilia profundicola (strain ATCC BAA-1463 / DSM 18972 / AmH) protein is Proline--tRNA ligase.